Consider the following 266-residue polypeptide: Putative carbamate hydrolase RutD (266 aa).

The protein belongs to the AB hydrolase superfamily. Hydrolase RutD family.

The catalysed reaction is carbamate + 2 H(+) = NH4(+) + CO2. Its function is as follows. Involved in pyrimidine catabolism. May facilitate the hydrolysis of carbamate, a reaction that can also occur spontaneously. This is Putative carbamate hydrolase RutD from Escherichia coli (strain B / BL21-DE3).